The sequence spans 339 residues: tRNA N6-adenosine threonylcarbamoyltransferase (339 aa).

The Fe cation site is built by histidine 111 and histidine 115. Residues 139–143 (LVSGG), aspartate 172, glycine 185, aspartate 189, and asparagine 280 each bind substrate. Residue aspartate 308 participates in Fe cation binding.

It belongs to the KAE1 / TsaD family. Fe(2+) is required as a cofactor.

It localises to the cytoplasm. It carries out the reaction L-threonylcarbamoyladenylate + adenosine(37) in tRNA = N(6)-L-threonylcarbamoyladenosine(37) in tRNA + AMP + H(+). Functionally, required for the formation of a threonylcarbamoyl group on adenosine at position 37 (t(6)A37) in tRNAs that read codons beginning with adenine. Is involved in the transfer of the threonylcarbamoyl moiety of threonylcarbamoyl-AMP (TC-AMP) to the N6 group of A37, together with TsaE and TsaB. TsaD likely plays a direct catalytic role in this reaction. In Bacteroides fragilis (strain ATCC 25285 / DSM 2151 / CCUG 4856 / JCM 11019 / LMG 10263 / NCTC 9343 / Onslow / VPI 2553 / EN-2), this protein is tRNA N6-adenosine threonylcarbamoyltransferase.